The chain runs to 683 residues: Synaptic vesicle glycoprotein 2B (683 aa).

Basic and acidic residues predominate over residues 1–10 (MDDYRYRDNY). Residues 1 to 72 (MDDYRYRDNY…QTKMAPSRAD (72 aa)) are disordered. At 1–110 (MDDYRYRDNY…ECGHGRFQWT (110 aa)) the chain is on the cytoplasmic side. Ser33 carries the phosphoserine modification. At Thr36 the chain carries Phosphothreonine. Residues 111–131 (LFFVLVLALMADGVEVFVVSF) traverse the membrane as a helical segment. Residues 132–148 (ALPSAEKDMCLSSSKKG) lie on the Extracellular side of the membrane. The chain crosses the membrane as a helical span at residues 149–169 (MLGLIVYLGMMAGAFILGGLA). Residues 170–182 (DKLGRKKVLSMSL) are Cytoplasmic-facing. The helical transmembrane segment at 183–203 (AINASFASLSSFVQGYGAFLF) threads the bilayer. Residues 204–205 (CR) lie on the Extracellular side of the membrane. The chain crosses the membrane as a helical span at residues 206–226 (LISGIGIGGSLPIVFAYFSEF). Over 227 to 237 (LSREKRGEHLS) the chain is Cytoplasmic. Residues 238–258 (WLGIFWMTGGIYASAMAWSII) form a helical membrane-spanning segment. The Extracellular portion of the chain corresponds to 259-277 (PHYGWGFSMGTNYHFHSWR). A helical membrane pass occupies residues 278-298 (VFVIVCALPATVSMVALKFMP). At 299 to 390 (ESPRFLLEMG…CVMGPYRMNT (92 aa)) the chain is on the cytoplasmic side. A helical membrane pass occupies residues 391–411 (LILAVVWFTMALSYYGLTVWF). Topologically, residues 412 to 535 (PDMIRYFQDE…CHMDFEEDND (124 aa)) are extracellular. At Tyr423 the chain carries Phosphotyrosine. N-linked (GlcNAc...) asparagine glycosylation is found at Asn441, Asn491, and Asn516. The helical transmembrane segment at 536-556 (FLIYLVSFLGSLSVLPGNIIS) threads the bilayer. Topologically, residues 557-565 (ALLMDRIGR) are cytoplasmic. A helical transmembrane segment spans residues 566–586 (LKMIGGSMLISAVCCFFLFFG). The Extracellular segment spans residues 587–592 (NSESAM). The chain crosses the membrane as a helical span at residues 593 to 613 (IGWQCLFCGTSIAAWNALDVI). The Cytoplasmic portion of the chain corresponds to 614–626 (TVELYPTNQRATA). A helical transmembrane segment spans residues 627–649 (FGILNGLCKLGAILGNTIFASFV). Topologically, residues 650–653 (GITK) are extracellular. A helical transmembrane segment spans residues 654-672 (VVPILLAAASLVGGGLVAL). The Cytoplasmic segment spans residues 673–683 (RLPETREQVLM).

The protein belongs to the major facilitator superfamily. As to quaternary structure, interacts with SYT1 in a calcium-independent manner. Forms a complex with SYT1, syntaxin-1 and SNAP25. (Microbial infection) Interacts with C.botulinum neurotoxin type A1 and type A2 (BoNT/A, botA). Interaction is improved by glycosylation of SV2. In terms of assembly, (Microbial infection) Interacts with C.botulinum neurotoxin type D (BoNT/D, botD). As to quaternary structure, (Microbial infection) Interacts with C.botulinum neurotoxin type E (BoNT/E). Interaction requires glycosylation of SV2 proteins. (Microbial infection) Interacts with C.botulinum neurotoxin type F (BoNT/F). Interaction requires glycosylation of SV2 proteins. In terms of processing, N-glycosylated. The N-terminal cytoplasmic domain is phosphorylated by CK1. Widely expressed throughout the brain. Specifically expressed by pinealocytes in the pineal gland. Also detected in testis (at protein level). Specifically expressed in neural tissues. Expressed in the spinal cord and in all brain regions with a stronger expression in hippocampus and cortex.

It is found in the cytoplasmic vesicle. The protein resides in the secretory vesicle. The protein localises to the synaptic vesicle membrane. It localises to the acrosome. In terms of biological role, probably plays a role in the control of regulated secretion in neural and endocrine cells. (Microbial infection) Receptor for C.botulinum neurotoxin type A (BoNT/A, botA); the toxin binds via extracellular loop 4. Restores uptake of BoNT/A in mouse and rat cells that are deleted for SV2 receptor. Glycosylation of SV2B is not essential for receptor activity, but enhances the interaction. Also serves as a receptor for the closely related C.botulinum neurotoxin type A2; glycosylation is not essential but enhances the interaction. Functionally, (Microbial infection) Possible receptor for C.botulinum neurotoxin type D (BoNT/D, botD); BoNT/D does not bind to extracellular loop 4 as do BoNT/A and BoNT/E. Another group does not find a convincing interaction with SV2. Its function is as follows. (Microbial infection) Receptor for C.botulinum neurotoxin type E (BoNT/E); the toxin probably binds via extracellular loop 4. Restores uptake of BoNT/E in mouse cells that are deleted for SV2 receptor. Glycosylation of SV2B is not essential for receptor activity, but enhances the interaction. In terms of biological role, (Microbial infection) Receptor for C.botulinum neurotoxin type F (BoNT/F); binding requires glycosylation of this protein. The chain is Synaptic vesicle glycoprotein 2B (Sv2b) from Rattus norvegicus (Rat).